The sequence spans 458 residues: RuvB-like protein 1 (458 aa).

Position 73–80 (73–80) interacts with ATP; that stretch reads GPPGTGKT.

Belongs to the RuvB family. Interacts with FRI, and with FLX and FES1, two component of the transcription activator complex FRI-C. Interacts with the disease resistance genes RPM1 and RPP5.

The protein localises to the nucleus. The enzyme catalyses ATP + H2O = ADP + phosphate + H(+). In terms of biological role, proposed core component of the chromatin remodeling INO80 complex which is involved in transcriptional regulation, DNA replication and probably DNA repair. Component of the NuA4 histone acetyltransferase complex which is involved in transcriptional activation of select genes principally by acetylation of nucleosomal histones H4 and H2A. Has single-stranded DNA-stimulated ATPase and ATP-dependent DNA helicase (3' to 5') activity suggesting a role in nuclear processes such as recombination and transcription. This chain is RuvB-like protein 1 (RIN1), found in Arabidopsis thaliana (Mouse-ear cress).